Reading from the N-terminus, the 657-residue chain is Hemocyanin A chain (657 aa).

An intrachain disulfide couples cysteine 93 to cysteine 98. Residue asparagine 167 is glycosylated (N-linked (GlcNAc...) asparagine). Cu cation contacts are provided by histidine 194, histidine 198, histidine 224, histidine 344, histidine 348, and histidine 384. Disulfide bonds link cysteine 483-cysteine 502 and cysteine 562-cysteine 609. The tract at residues 594 to 616 (EGHNGGHDYGGTHAQCGVHGEAY) is disordered.

This sequence belongs to the tyrosinase family. Hemocyanin subfamily. Hexamer of a number of different chains, of which A, B, and C have been identified. In terms of tissue distribution, hemolymph.

Its subcellular location is the secreted. The protein resides in the extracellular space. In terms of biological role, hemocyanins are copper-containing oxygen carriers occurring freely dissolved in the hemolymph of many mollusks and arthropods. The chain is Hemocyanin A chain from Panulirus interruptus (California spiny lobster).